A 111-amino-acid chain; its full sequence is Universal stress protein B (111 aa).

Helical transmembrane passes span 1–21 and 90–110; these read MIST…NMAR and FLLT…MMMW.

The protein belongs to the universal stress protein B family.

Its subcellular location is the cell inner membrane. In Pectobacterium atrosepticum (strain SCRI 1043 / ATCC BAA-672) (Erwinia carotovora subsp. atroseptica), this protein is Universal stress protein B.